A 453-amino-acid chain; its full sequence is Tol-Pal system protein TolB (453 aa).

The first 31 residues, 1-31 (MINNLSISMTKVIKIILAIIIILFNTLSIFA), serve as a signal peptide directing secretion.

This sequence belongs to the TolB family. The Tol-Pal system is composed of five core proteins: the inner membrane proteins TolA, TolQ and TolR, the periplasmic protein TolB and the outer membrane protein Pal. They form a network linking the inner and outer membranes and the peptidoglycan layer.

It localises to the periplasm. In terms of biological role, part of the Tol-Pal system, which plays a role in outer membrane invagination during cell division and is important for maintaining outer membrane integrity. This Orientia tsutsugamushi (strain Ikeda) (Rickettsia tsutsugamushi) protein is Tol-Pal system protein TolB.